Reading from the N-terminus, the 178-residue chain is MEIRDNNKVNLCFAFDNLRKELSRPYGILFTNNKLFLDFVSKSIQQGFKVITVGDYVSRVLEENGIIPFLEVIDGKTKRSIPQRTIVKNKEYKVTNEAGKIRFEIFEIMENILKDRDGGVVFVNGEEDLLVIPVTLSADNGDIVIYGQPNAGAVVIIVNEMIRWRVRDILEKAVVKEC.

GTP is bound by residues Asp-55, Val-57, Asp-74, Lys-76, and Glu-127.

This sequence belongs to the GTP-dependent DPCK family.

It carries out the reaction 3'-dephospho-CoA + GTP = GDP + CoA + H(+). The protein operates within cofactor biosynthesis; coenzyme A biosynthesis. Its function is as follows. Catalyzes the GTP-dependent phosphorylation of the 3'-hydroxyl group of dephosphocoenzyme A to form coenzyme A (CoA). The polypeptide is GTP-dependent dephospho-CoA kinase (Saccharolobus islandicus (strain Y.G.57.14 / Yellowstone #1) (Sulfolobus islandicus)).